Consider the following 468-residue polypeptide: Argininosuccinate lyase (468 aa).

The protein belongs to the lyase 1 family. Argininosuccinate lyase subfamily.

It is found in the cytoplasm. The enzyme catalyses 2-(N(omega)-L-arginino)succinate = fumarate + L-arginine. Its pathway is amino-acid biosynthesis; L-arginine biosynthesis; L-arginine from L-ornithine and carbamoyl phosphate: step 3/3. The polypeptide is Argininosuccinate lyase (Paraburkholderia xenovorans (strain LB400)).